The following is a 358-amino-acid chain: tRNA N6-adenosine threonylcarbamoyltransferase (358 aa).

Fe cation-binding residues include histidine 111 and histidine 115. Substrate-binding positions include 146-150, aspartate 179, glycine 192, and asparagine 294; that span reads LVSGG. Aspartate 322 provides a ligand contact to Fe cation.

It belongs to the KAE1 / TsaD family. Requires Fe(2+) as cofactor.

The protein localises to the cytoplasm. The catalysed reaction is L-threonylcarbamoyladenylate + adenosine(37) in tRNA = N(6)-L-threonylcarbamoyladenosine(37) in tRNA + AMP + H(+). Required for the formation of a threonylcarbamoyl group on adenosine at position 37 (t(6)A37) in tRNAs that read codons beginning with adenine. Is involved in the transfer of the threonylcarbamoyl moiety of threonylcarbamoyl-AMP (TC-AMP) to the N6 group of A37, together with TsaE and TsaB. TsaD likely plays a direct catalytic role in this reaction. This chain is tRNA N6-adenosine threonylcarbamoyltransferase, found in Helicobacter hepaticus (strain ATCC 51449 / 3B1).